Reading from the N-terminus, the 137-residue chain is Large ribosomal subunit protein uL13 (137 aa).

Citrulline is present on Arg55. Ser73 bears the Phosphoserine mark. Residue Arg136 is modified to Citrulline.

The protein belongs to the universal ribosomal protein uL13 family. In terms of assembly, component of the 60S ribosome. Component of the GAIT complex. Interacts with EIF4G1. Post-translationally, phosphorylation at Ser-73 upon interferon-gamma treatment in macrophages involves a DAPK1-DAPK3 kinase cascade and is causing release from the ribosome, association with the GAIT complex and subsequent involvement in transcript-selective translation inhibition. In terms of processing, citrullinated by PADI4.

It is found in the cytoplasm. Functionally, associated with ribosomes but is not required for canonical ribosome function and has extra-ribosomal functions. Component of the GAIT (gamma interferon-activated inhibitor of translation) complex which mediates interferon-gamma-induced transcript-selective translation inhibition in inflammation processes. Upon interferon-gamma activation and subsequent phosphorylation dissociates from the ribosome and assembles into the GAIT complex which binds to stem loop-containing GAIT elements in the 3'-UTR of diverse inflammatory mRNAs (such as ceruplasmin) and suppresses their translation. In the GAIT complex interacts with m7G cap-bound eIF4G at or near the eIF3-binding site and blocks the recruitment of the 43S ribosomal complex. Involved in methylation of rRNA. This is Large ribosomal subunit protein uL13 (RPL13A) from Sus scrofa (Pig).